A 932-amino-acid polypeptide reads, in one-letter code: DNA mismatch repair protein MutS (932 aa).

615–622 (GPNMAGKS) is an ATP binding site.

It belongs to the DNA mismatch repair MutS family.

This protein is involved in the repair of mismatches in DNA. It is possible that it carries out the mismatch recognition step. This protein has a weak ATPase activity. The chain is DNA mismatch repair protein MutS from Clostridium botulinum (strain 657 / Type Ba4).